The sequence spans 229 residues: Platelet-activating factor acetylhydrolase IB subunit alpha2 (229 aa).

Ser2 bears the N-acetylserine mark. The residue at position 2 (Ser2) is a Phosphoserine. Ser48 is an active-site residue. Ser64 carries the phosphoserine modification. Residues Asp193 and His196 contribute to the active site. At Thr220 the chain carries Phosphothreonine.

This sequence belongs to the 'GDSL' lipolytic enzyme family. Platelet-activating factor acetylhydrolase IB beta/gamma subunits subfamily. Forms a catalytic dimer which is either homodimer (alpha2/alpha2 homodimer) or heterodimer with PAFAH1B3 (alpha2/alpha1 heterodimer). Component of the cytosolic (PAF-AH (I)) heterotetrameric enzyme, which is composed of PAFAH1B1 (beta), PAFAH1B2 (alpha2) and PAFAH1B3 (alpha1) subunits. The catalytic activity of the enzyme resides in the alpha1 (PAFAH1B3) and alpha2 (PAFAH1B2) subunits, whereas the beta subunit (PAFAH1B1) has regulatory activity. Trimer formation is not essential for the catalytic activity. Interacts (homodimer form) with PAFAH1B1 (homodimer form); PAFAH1B2 competes with NDEL1 for PAFAH1B1 binding. Interacts with VLDLR; this interaction may modulate the Reelin pathway.

It localises to the cytoplasm. It carries out the reaction a 1-O-alkyl-2-acetyl-sn-glycero-3-phosphocholine + H2O = a 1-O-alkyl-sn-glycero-3-phosphocholine + acetate + H(+). The enzyme catalyses 1-O-hexadecyl-2-acetyl-sn-glycero-3-phosphocholine + H2O = 1-O-hexadecyl-sn-glycero-3-phosphocholine + acetate + H(+). It catalyses the reaction 1-O-hexadecyl-2-acetyl-sn-glycero-3-phosphate + H2O = 1-O-hexadecyl-sn-glycero-3-phosphate + acetate + H(+). The catalysed reaction is 1-O-hexadecyl-2-acetyl-sn-glycero-3-phosphoethanolamine + H2O = 1-O-hexadecyl-sn-glycero-3-phosphoethanolamine + acetate + H(+). With respect to regulation, beta subunit (PAFAH1B1) stimulates the acetylhydrolase activity of the alpha2/alpha2 catalytic homodimer. Functionally, alpha2 catalytic subunit of the cytosolic type I platelet-activating factor (PAF) acetylhydrolase (PAF-AH (I)) heterotetrameric enzyme that catalyzes the hydrolyze of the acetyl group at the sn-2 position of PAF and its analogs and modulates the action of PAF. The activity and substrate specificity of PAF-AH (I) are affected by its subunit composition. The alpha2/alpha2 homodimer (PAFAH1B2/PAFAH1B2 homodimer) hydrolyzes PAF and 1-O-alkyl-2-acetyl-sn-glycero-3-phosphorylethanolamine (AAGPE) more efficiently than 1-O-alkyl-2-acetyl-sn-glycero-3-phosphoric acid (AAGPA). In contrast, the alpha1/alpha2 heterodimer(PAFAH1B3/PAFAH1B3 heterodimer) hydrolyzes AAGPA more efficiently than PAF, but has little hydrolytic activity towards AAGPE. May play a role in male germ cell meiosis during the late pachytenestage and meiotic divisions as well as early spermiogenesis. The chain is Platelet-activating factor acetylhydrolase IB subunit alpha2 from Mus musculus (Mouse).